We begin with the raw amino-acid sequence, 637 residues long: Nuclear receptor-binding protein homolog (637 aa).

Residues 1–14 (MSNSQANAGISGST) show a composition bias toward polar residues. 2 disordered regions span residues 1 to 60 (MSNS…TADA) and 74 to 99 (SEGV…ILEE). Over residues 36–46 (PAATPPSQSTQ) the composition is skewed to low complexity. Over residues 88–98 (DDSEDESEILE) the composition is skewed to acidic residues. A Protein kinase domain is found at 109 to 375 (REEVDQRDVP…ANDLLFHPLL (267 aa)). Disordered regions lie at residues 465–489 (PNFR…EPVD) and 617–637 (PQEQ…TTSN). A phosphoserine mark is found at Ser473, Ser479, and Ser482. At Thr484 the chain carries Phosphothreonine.

It belongs to the protein kinase superfamily. Ser/Thr protein kinase family.

The protein localises to the cytoplasm. It localises to the cell cortex. Its function is as follows. May play a role in subcellular trafficking between the endoplasmic reticulum and Golgi apparatus. The polypeptide is Nuclear receptor-binding protein homolog (Drosophila melanogaster (Fruit fly)).